A 708-amino-acid chain; its full sequence is ABC transporter G family member 18 (708 aa).

The region spanning Arg-75–Glu-317 is the ABC transporter domain. Gly-109 to Ser-116 serves as a coordination point for ATP. Residues Ala-402–Phe-612 enclose the ABC transmembrane type-2 domain. The next 7 helical transmembrane spans lie at Leu-421–Trp-441, Phe-456–Ile-476, Leu-508–Gly-528, Leu-537–Ile-557, Val-560–Phe-580, Leu-589–Ile-609, and Leu-681–Phe-701.

Belongs to the ABC transporter superfamily. ABCG family. Eye pigment precursor importer (TC 3.A.1.204) subfamily.

Its subcellular location is the membrane. In Arabidopsis thaliana (Mouse-ear cress), this protein is ABC transporter G family member 18 (ABCG18).